The chain runs to 497 residues: L-arabinose isomerase (497 aa).

Mn(2+)-binding residues include E306, E333, H349, and H448.

Belongs to the arabinose isomerase family. The cofactor is Mn(2+).

The catalysed reaction is beta-L-arabinopyranose = L-ribulose. It functions in the pathway carbohydrate degradation; L-arabinose degradation via L-ribulose; D-xylulose 5-phosphate from L-arabinose (bacterial route): step 1/3. Catalyzes the conversion of L-arabinose to L-ribulose. The chain is L-arabinose isomerase from Vibrio parahaemolyticus serotype O3:K6 (strain RIMD 2210633).